Consider the following 169-residue polypeptide: Ubiquitin-fold modifier-conjugating enzyme 1 (169 aa).

Cys116 functions as the Glycyl thioester intermediate in the catalytic mechanism.

This sequence belongs to the ubiquitin-conjugating enzyme family. UFC1 subfamily.

In terms of biological role, E2-like enzyme which forms an intermediate with UFM1 via a thioester linkage. The protein is Ubiquitin-fold modifier-conjugating enzyme 1 of Nematostella vectensis (Starlet sea anemone).